We begin with the raw amino-acid sequence, 324 residues long: Large ribosomal subunit protein uL3m (324 aa).

A mitochondrion-targeting transit peptide spans methionine 1–phenylalanine 41. The segment at proline 206–lysine 229 is disordered.

The protein belongs to the universal ribosomal protein uL3 family. Part of the 50S ribosomal subunit.

The protein localises to the mitochondrion. Functionally, one of the primary rRNA binding proteins, it binds directly near the 3'-end of the 23S rRNA, where it nucleates assembly of the 50S subunit. This Arabidopsis thaliana (Mouse-ear cress) protein is Large ribosomal subunit protein uL3m.